The following is a 396-amino-acid chain: Elongation factor Tu (396 aa).

In terms of domain architecture, tr-type G spans 10-206; it reads KPHCNIGTIG…AVDAYIPQPE (197 aa). A G1 region spans residues 19–26; sequence GHVDHGKT. 19–26 contributes to the GTP binding site; it reads GHVDHGKT. Thr26 serves as a coordination point for Mg(2+). Positions 60 to 64 are G2; that stretch reads GITIS. Residues 81 to 84 form a G3 region; it reads DCPG. GTP is bound by residues 81-85 and 136-139; these read DCPGH and NKCD. Residues 136 to 139 are G4; the sequence is NKCD. Positions 174-176 are G5; the sequence is SAL.

Belongs to the TRAFAC class translation factor GTPase superfamily. Classic translation factor GTPase family. EF-Tu/EF-1A subfamily. As to quaternary structure, monomer.

Its subcellular location is the cytoplasm. It catalyses the reaction GTP + H2O = GDP + phosphate + H(+). Its function is as follows. GTP hydrolase that promotes the GTP-dependent binding of aminoacyl-tRNA to the A-site of ribosomes during protein biosynthesis. The sequence is that of Elongation factor Tu from Rhodopseudomonas palustris (strain BisB18).